The following is a 643-amino-acid chain: Phosphomethylpyrimidine synthase (643 aa).

Substrate-binding positions include asparagine 248, methionine 277, tyrosine 306, histidine 342, 362–364 (SRG), 403–406 (DGLR), and glutamate 442. Histidine 446 lines the Zn(2+) pocket. Residue tyrosine 469 coordinates substrate. A Zn(2+)-binding site is contributed by histidine 510. [4Fe-4S] cluster contacts are provided by cysteine 590, cysteine 593, and cysteine 598.

Belongs to the ThiC family. As to quaternary structure, homodimer. [4Fe-4S] cluster serves as cofactor.

The enzyme catalyses 5-amino-1-(5-phospho-beta-D-ribosyl)imidazole + S-adenosyl-L-methionine = 4-amino-2-methyl-5-(phosphooxymethyl)pyrimidine + CO + 5'-deoxyadenosine + formate + L-methionine + 3 H(+). It functions in the pathway cofactor biosynthesis; thiamine diphosphate biosynthesis. In terms of biological role, catalyzes the synthesis of the hydroxymethylpyrimidine phosphate (HMP-P) moiety of thiamine from aminoimidazole ribotide (AIR) in a radical S-adenosyl-L-methionine (SAM)-dependent reaction. The polypeptide is Phosphomethylpyrimidine synthase (Burkholderia cenocepacia (strain ATCC BAA-245 / DSM 16553 / LMG 16656 / NCTC 13227 / J2315 / CF5610) (Burkholderia cepacia (strain J2315))).